Here is a 700-residue protein sequence, read N- to C-terminus: MANKREFPLDRTRNIGIMAHIDAGKTTTTERILYYTGKIHKIGETHEGASQMDWMPQEQERGITITSAATTAFWKDHRVNIIDTPGHVDFTIEVERSLRVLDGAITVLDAQSGVEPQTENVWRQATTYGVPRLVFVNKMDKIGADFDYSMTTLHDRLQANAHAVQMPIGAEDKFEGVIDLIEMKADLYDEDELGTKWDTVDVPDDYKEAAQKAHNDLIEAVADVDDGIMDKYLEGEEISNAELKAAIRKATINLEFYPVLAGSAFKNKGVQMLLDAVIDYLPSPLDVRPYHATDPDTGDAVELTAGDDKPFAALAFKVATDPFVGRLTYIRVYSGTLEAGSYVLNATKDNRERVGRLLQMHSNHREEIPEVFSGDIAAAIGLKNTTTGDSLTDVDHPLILESLDVPDPVIQVSIEPDSKEDQDKLDVGLQKLSEEDPTFKAETSPETGETLIAGMGELHLDIMVDRLKREFKVAAKVGEPQVAYRETFTKETSAQGKFVRQSGGKGQYGDVWIEFSPNEEGKGFEFENAIVGGVVPREYIPAVEQGLKEAMANGVLAGYPLIDVKAKLYDGSYHEVDSSEAAFKVAASMALKNASKSAGAVILEPIMHVEVVAPEEYLGDVMGQITARRGRVEGMEARGNAQLVNSMVPLAEMFGYATTLRSATQGRGTFTMTFDHYEAVPKSIQAEIIKKNGGGVATKD.

In terms of domain architecture, tr-type G spans 10–285; the sequence is DRTRNIGIMA…AVIDYLPSPL (276 aa). Residues 19-26, 83-87, and 137-140 each bind GTP; these read AHIDAGKT, DTPGH, and NKMD.

Belongs to the TRAFAC class translation factor GTPase superfamily. Classic translation factor GTPase family. EF-G/EF-2 subfamily.

The protein resides in the cytoplasm. Catalyzes the GTP-dependent ribosomal translocation step during translation elongation. During this step, the ribosome changes from the pre-translocational (PRE) to the post-translocational (POST) state as the newly formed A-site-bound peptidyl-tRNA and P-site-bound deacylated tRNA move to the P and E sites, respectively. Catalyzes the coordinated movement of the two tRNA molecules, the mRNA and conformational changes in the ribosome. This Lacticaseibacillus paracasei (strain ATCC 334 / BCRC 17002 / CCUG 31169 / CIP 107868 / KCTC 3260 / NRRL B-441) (Lactobacillus paracasei) protein is Elongation factor G.